The following is a 209-amino-acid chain: COP9 signalosome complex subunit 8 (209 aa).

The PCI domain maps to 8–179 (ESAFSFKKLL…GALDVSFNKF (172 aa)). Ser-175 bears the Phosphoserine mark.

This sequence belongs to the CSN8 family. In terms of assembly, component of the CSN complex, composed of COPS1/GPS1, COPS2, COPS3, COPS4, COPS5, COPS6, COPS7 (COPS7A or COPS7B), COPS8 and COPS9. In the complex, it probably interacts directly with COPS3, COPS4 and COPS7 (COPS7A or COPS7B).

The protein localises to the cytoplasm. It localises to the nucleus. Functionally, component of the COP9 signalosome complex (CSN), a complex involved in various cellular and developmental processes. The CSN complex is an essential regulator of the ubiquitin (Ubl) conjugation pathway by mediating the deneddylation of the cullin subunits of SCF-type E3 ligase complexes, leading to decrease the Ubl ligase activity of SCF-type complexes such as SCF, CSA or DDB2. The complex is also involved in phosphorylation of p53/TP53, c-jun/JUN, IkappaBalpha/NFKBIA, ITPK1 and IRF8/ICSBP, possibly via its association with CK2 and PKD kinases. CSN-dependent phosphorylation of TP53 and JUN promotes and protects degradation by the Ubl system, respectively. The sequence is that of COP9 signalosome complex subunit 8 (COPS8) from Pongo abelii (Sumatran orangutan).